A 162-amino-acid chain; its full sequence is Large ribosomal subunit protein uL10 (162 aa).

Belongs to the universal ribosomal protein uL10 family. In terms of assembly, part of the ribosomal stalk of the 50S ribosomal subunit. The N-terminus interacts with L11 and the large rRNA to form the base of the stalk. The C-terminus forms an elongated spine to which L12 dimers bind in a sequential fashion forming a multimeric L10(L12)X complex.

Functionally, forms part of the ribosomal stalk, playing a central role in the interaction of the ribosome with GTP-bound translation factors. This chain is Large ribosomal subunit protein uL10, found in Vibrio cholerae serotype O1 (strain ATCC 39541 / Classical Ogawa 395 / O395).